The following is a 280-amino-acid chain: MLKDMFSKKKRYATIPSERAKQEVPEGIMTKCPSCRTIMYTKDLKKNLSVCRTCGHHHRMSARERIDSIIDDGTFKEAFASVKGGNPLQFPGYEEKLESDRKKTGLNEAVVTGEGKINGYPVVIAVMDPNFRMASMGSAVGEKLTRAIELATETSVPLLIFAASGGARMQEGMLSLMQMAKTSAALERLNRAGGLYISVMTNPTTGGVSASFASLGDYNFAEPKALIGFAGRRIIEQTIRQELPEDFQTAEFLLEHGQLDRVIPRLEMKETLTKLLAMHQ.

Residues 28 to 280 form the CoA carboxyltransferase N-terminal domain; the sequence is IMTKCPSCRT…TLTKLLAMHQ (253 aa). Cys32, Cys35, Cys51, and Cys54 together coordinate Zn(2+). Residues 32 to 54 form a C4-type zinc finger; that stretch reads CPSCRTIMYTKDLKKNLSVCRTC.

The protein belongs to the AccD/PCCB family. Acetyl-CoA carboxylase is a heterohexamer composed of biotin carboxyl carrier protein (AccB), biotin carboxylase (AccC) and two subunits each of ACCase subunit alpha (AccA) and ACCase subunit beta (AccD). Zn(2+) is required as a cofactor.

The protein localises to the cytoplasm. It carries out the reaction N(6)-carboxybiotinyl-L-lysyl-[protein] + acetyl-CoA = N(6)-biotinyl-L-lysyl-[protein] + malonyl-CoA. It participates in lipid metabolism; malonyl-CoA biosynthesis; malonyl-CoA from acetyl-CoA: step 1/1. Component of the acetyl coenzyme A carboxylase (ACC) complex. Biotin carboxylase (BC) catalyzes the carboxylation of biotin on its carrier protein (BCCP) and then the CO(2) group is transferred by the transcarboxylase to acetyl-CoA to form malonyl-CoA. The polypeptide is Acetyl-coenzyme A carboxylase carboxyl transferase subunit beta (Shouchella clausii (strain KSM-K16) (Alkalihalobacillus clausii)).